The sequence spans 102 residues: Putative toxin YafQ (102 aa).

It belongs to the RelE toxin family. YafQ subfamily.

Its function is as follows. Toxic component of a type II toxin-antitoxin (TA) system. Its cognate antitoxin is RelB. This Haemophilus influenzae (strain ATCC 51907 / DSM 11121 / KW20 / Rd) protein is Putative toxin YafQ.